Here is a 108-residue protein sequence, read N- to C-terminus: Succinate dehydrogenase assembly factor 4, mitochondrial (108 aa).

Positions 33–46 (NNNNNNNNNNNNNN) are enriched in low complexity. Disordered stretches follow at residues 33-59 (NNNN…KENQ) and 79-108 (NPIT…VSDF). Basic and acidic residues predominate over residues 95 to 108 (RYNDWERNGRVSDF).

This sequence belongs to the SDHAF4 family. In terms of assembly, interacts with SdhA in its FAD-bound form.

It is found in the mitochondrion matrix. Plays an essential role in the assembly of succinate dehydrogenase (SDH), an enzyme complex (also referred to as respiratory complex II) that is a component of both the tricarboxylic acid (TCA) cycle and the mitochondrial electron transport chain, and which couples the oxidation of succinate to fumarate with the reduction of ubiquinone (coenzyme Q) to ubiquinol. Binds to the flavoprotein subunit SdhA in its FAD-bound form, blocking the generation of excess reactive oxygen species (ROS) and facilitating its assembly with the iron-sulfur protein subunit SdhB into the SDH catalytic dimer. The polypeptide is Succinate dehydrogenase assembly factor 4, mitochondrial (Dictyostelium discoideum (Social amoeba)).